The following is a 76-amino-acid chain: Cytochrome c oxidase subunit 6C-2 (76 aa).

Residues 4 to 14 (GALLPKPQMRG) are Mitochondrial matrix-facing. A helical membrane pass occupies residues 15 to 55 (LLAKRLRVHIVGAFVVALGVAAAYKFGVAEPRKKAYADFYR). Residues 56–76 (NYDSMKDFEEMRQAGVFQSAK) are Mitochondrial intermembrane-facing. At Ser74 the chain carries Phosphoserine.

It belongs to the cytochrome c oxidase subunit 6c family. Component of the cytochrome c oxidase (complex IV, CIV), a multisubunit enzyme composed of 14 subunits. The complex is composed of a catalytic core of 3 subunits MT-CO1, MT-CO2 and MT-CO3, encoded in the mitochondrial DNA, and 11 supernumerary subunits COX4I, COX5A, COX5B, COX6A, COX6B, COX6C, COX7A, COX7B, COX7C, COX8 and NDUFA4, which are encoded in the nuclear genome. The complex exists as a monomer or a dimer and forms supercomplexes (SCs) in the inner mitochondrial membrane with NADH-ubiquinone oxidoreductase (complex I, CI) and ubiquinol-cytochrome c oxidoreductase (cytochrome b-c1 complex, complex III, CIII), resulting in different assemblies (supercomplex SCI(1)III(2)IV(1) and megacomplex MCI(2)III(2)IV(2)).

Its subcellular location is the mitochondrion inner membrane. The protein operates within energy metabolism; oxidative phosphorylation. Component of the cytochrome c oxidase, the last enzyme in the mitochondrial electron transport chain which drives oxidative phosphorylation. The respiratory chain contains 3 multisubunit complexes succinate dehydrogenase (complex II, CII), ubiquinol-cytochrome c oxidoreductase (cytochrome b-c1 complex, complex III, CIII) and cytochrome c oxidase (complex IV, CIV), that cooperate to transfer electrons derived from NADH and succinate to molecular oxygen, creating an electrochemical gradient over the inner membrane that drives transmembrane transport and the ATP synthase. Cytochrome c oxidase is the component of the respiratory chain that catalyzes the reduction of oxygen to water. Electrons originating from reduced cytochrome c in the intermembrane space (IMS) are transferred via the dinuclear copper A center (CU(A)) of subunit 2 and heme A of subunit 1 to the active site in subunit 1, a binuclear center (BNC) formed by heme A3 and copper B (CU(B)). The BNC reduces molecular oxygen to 2 water molecules using 4 electrons from cytochrome c in the IMS and 4 protons from the mitochondrial matrix. This is Cytochrome c oxidase subunit 6C-2 (Cox6c2) from Rattus norvegicus (Rat).